The chain runs to 147 residues: Transcriptional repressor NrdR (147 aa).

Residues cysteine 3–cysteine 34 fold into a zinc finger. In terms of domain architecture, ATP-cone spans leucine 46–aspartate 136.

Belongs to the NrdR family. Zn(2+) is required as a cofactor.

Functionally, negatively regulates transcription of bacterial ribonucleotide reductase nrd genes and operons by binding to NrdR-boxes. This is Transcriptional repressor NrdR from Tropheryma whipplei (strain TW08/27) (Whipple's bacillus).